The following is a 1215-amino-acid chain: DNA-directed RNA polymerase subunit beta' (1215 aa).

4 residues coordinate Zn(2+): C60, C62, C75, and C78. Mg(2+) is bound by residues D450, D452, and D454. 4 residues coordinate Zn(2+): C818, C892, C899, and C902.

It belongs to the RNA polymerase beta' chain family. The RNAP catalytic core consists of 2 alpha, 1 beta, 1 beta' and 1 omega subunit. When a sigma factor is associated with the core the holoenzyme is formed, which can initiate transcription. It depends on Mg(2+) as a cofactor. Requires Zn(2+) as cofactor.

The catalysed reaction is RNA(n) + a ribonucleoside 5'-triphosphate = RNA(n+1) + diphosphate. In terms of biological role, DNA-dependent RNA polymerase catalyzes the transcription of DNA into RNA using the four ribonucleoside triphosphates as substrates. The chain is DNA-directed RNA polymerase subunit beta' from Streptococcus suis (strain 98HAH33).